Here is a 476-residue protein sequence, read N- to C-terminus: UDP-N-acetylmuramoylalanine--D-glutamate ligase (476 aa).

G122–T128 contacts ATP.

Belongs to the MurCDEF family.

It is found in the cytoplasm. It catalyses the reaction UDP-N-acetyl-alpha-D-muramoyl-L-alanine + D-glutamate + ATP = UDP-N-acetyl-alpha-D-muramoyl-L-alanyl-D-glutamate + ADP + phosphate + H(+). It participates in cell wall biogenesis; peptidoglycan biosynthesis. In terms of biological role, cell wall formation. Catalyzes the addition of glutamate to the nucleotide precursor UDP-N-acetylmuramoyl-L-alanine (UMA). The polypeptide is UDP-N-acetylmuramoylalanine--D-glutamate ligase (Psychrobacter arcticus (strain DSM 17307 / VKM B-2377 / 273-4)).